A 286-amino-acid polypeptide reads, in one-letter code: ATP synthase gamma chain (286 aa).

Belongs to the ATPase gamma chain family. F-type ATPases have 2 components, CF(1) - the catalytic core - and CF(0) - the membrane proton channel. CF(1) has five subunits: alpha(3), beta(3), gamma(1), delta(1), epsilon(1). CF(0) has three main subunits: a, b and c.

Its subcellular location is the cell inner membrane. Functionally, produces ATP from ADP in the presence of a proton gradient across the membrane. The gamma chain is believed to be important in regulating ATPase activity and the flow of protons through the CF(0) complex. This Shewanella putrefaciens (strain CN-32 / ATCC BAA-453) protein is ATP synthase gamma chain.